The primary structure comprises 515 residues: MDEFHRYGKEDSSWQQCFLYPLFFQEDLYAISHDHYLDGSSSSEPMEHLSSNDQFSFLTVKRLIGQIRQQNHSIVLFVNCDPNPLVDRKKSSYSESVLEGLTLVLEVPFSIRSKYSVEGMNEWKSFRSIHSIFPFLEDKFPHSNYVSDTRIPYSIHPEILVRTFRRWIGDAPSLHPLRSILYEYRNSSESLQRSIIVVPKVNTRFFLFLWNNYVYECESILVSLLKRSSHSRSLSHGSFPQRTHFHRKIKNIFLFSRRNSFQSIWSLKDPNIHYVRYGERSIIAIKGTHLLVKKYRYYLPIFRQCYFHLWNEPYRVCFHQLSKNCSSSLGYFLRVRMKPLLVKTKMLDELFIADLITDEFDPIVPIVPIIGLLSREKFCDISGRPISKLSWTSLTDDDILDRFDRIWRNIFHYYSGSFGRDGLYRIKYILSLSCAKTLACKHKSTIRVVRKELGPELFKKSFSKERELDSPPFSSKAAARSQRERIWHSDIPQINPLAHSWQKIQDLKIENLFDQ.

The protein belongs to the intron maturase 2 family. MatK subfamily.

The protein localises to the plastid. It localises to the chloroplast. Its function is as follows. Usually encoded in the trnK tRNA gene intron. Probably assists in splicing its own and other chloroplast group II introns. In Picea mariana (Black spruce), this protein is Maturase K.